Consider the following 316-residue polypeptide: Ribosomal RNA small subunit methyltransferase H (316 aa).

S-adenosyl-L-methionine contacts are provided by residues 35 to 37, Asp55, Phe84, Asp105, and Gln112; that span reads SGH.

The protein belongs to the methyltransferase superfamily. RsmH family.

It is found in the cytoplasm. It catalyses the reaction cytidine(1402) in 16S rRNA + S-adenosyl-L-methionine = N(4)-methylcytidine(1402) in 16S rRNA + S-adenosyl-L-homocysteine + H(+). In terms of biological role, specifically methylates the N4 position of cytidine in position 1402 (C1402) of 16S rRNA. The protein is Ribosomal RNA small subunit methyltransferase H of Streptococcus dysgalactiae subsp. equisimilis (strain GGS_124).